Reading from the N-terminus, the 89-residue chain is Large ribosomal subunit protein uL23cz/uL23cy (89 aa).

It belongs to the universal ribosomal protein uL23 family. Part of the 50S ribosomal subunit.

The protein resides in the plastid. It is found in the chloroplast. Functionally, binds to 23S rRNA. This is Large ribosomal subunit protein uL23cz/uL23cy (rpl23-A) from Pelargonium hortorum (Common geranium).